A 579-amino-acid polypeptide reads, in one-letter code: Tyrosine 3-monooxygenase (579 aa).

The span at 105–114 shows a compositional bias: acidic residues; that stretch reads VEFESVEQEQ. The disordered stretch occupies residues 105 to 132; the sequence is VEFESVEQEQSESQSQEPEGNQQPTKND. Fe cation-binding residues include His-409, His-414, and Glu-454.

This sequence belongs to the biopterin-dependent aromatic amino acid hydroxylase family. Fe(2+) is required as a cofactor.

Its subcellular location is the cytoplasm. The protein localises to the perinuclear region. It is found in the cell projection. The protein resides in the axon. The enzyme catalyses (6R)-L-erythro-5,6,7,8-tetrahydrobiopterin + L-tyrosine + O2 = (4aS,6R)-4a-hydroxy-L-erythro-5,6,7,8-tetrahydrobiopterin + L-dopa. It functions in the pathway catecholamine biosynthesis; dopamine biosynthesis; dopamine from L-tyrosine: step 1/2. With respect to regulation, phosphorylation leads to an increase in the catalytic activity. Plays an important role in the physiology of adrenergic neurons. In Drosophila melanogaster (Fruit fly), this protein is Tyrosine 3-monooxygenase (ple).